The following is a 252-amino-acid chain: Chitooligosaccharide deacetylase (252 aa).

Histidine 61 and histidine 125 together coordinate Mg(2+).

It belongs to the YdjC deacetylase family. ChbG subfamily. As to quaternary structure, homodimer. It depends on Mg(2+) as a cofactor.

It localises to the cytoplasm. It catalyses the reaction N,N'-diacetylchitobiose + H2O = N-acetyl-beta-D-glucosaminyl-(1-&gt;4)-D-glucosamine + acetate. The enzyme catalyses diacetylchitobiose-6'-phosphate + H2O = N'-monoacetylchitobiose-6'-phosphate + acetate. Its pathway is glycan degradation; chitin degradation. Its function is as follows. Involved in the degradation of chitin. ChbG is essential for growth on the acetylated chitooligosaccharides chitobiose and chitotriose but is dispensable for growth on cellobiose and chitosan dimer, the deacetylated form of chitobiose. Deacetylation of chitobiose-6-P and chitotriose-6-P is necessary for both the activation of the chb promoter by the regulatory protein ChbR and the hydrolysis of phosphorylated beta-glucosides by the phospho-beta-glucosidase ChbF. Catalyzes the removal of only one acetyl group from chitobiose-6-P to yield monoacetylchitobiose-6-P, the inducer of ChbR and the substrate of ChbF. In Salmonella typhi, this protein is Chitooligosaccharide deacetylase.